Here is a 324-residue protein sequence, read N- to C-terminus: Zinc transporter ZIP1 (324 aa).

At Met1–Lys30 the chain is on the extracellular side. A helical transmembrane segment spans residues Leu31–Val51. The Cytoplasmic portion of the chain corresponds to Leu52 to Ala68. The helical transmembrane segment at Leu69 to Leu89 threads the bilayer. Residues Pro90–His104 are Extracellular-facing. The chain crosses the membrane as a helical span at residues Val105–Val125. Residues Met126 to Arg179 lie on the Cytoplasmic side of the membrane. The chain crosses the membrane as a helical span at residues Ala180–Leu200. The Extracellular segment spans residues Gln201–Arg206. Residues Ala207 to Leu227 form a helical membrane-spanning segment. At Arg228 to Gln237 the chain is on the cytoplasmic side. Residues Val238–Ala258 form a helical membrane-spanning segment. At Ala259 to Gln272 the chain is on the extracellular side. Residues Ser273–Pro293 traverse the membrane as a helical segment. Residues Gln294–Ile303 lie on the Cytoplasmic side of the membrane. The chain crosses the membrane as a helical span at residues Leu304 to Ile324.

It belongs to the ZIP transporter (TC 2.A.5) family. As to expression, ubiquitous. Expressed in most adult and fetal tissues including the epidermis.

It localises to the cell membrane. The protein localises to the endoplasmic reticulum membrane. It carries out the reaction Zn(2+)(in) = Zn(2+)(out). With respect to regulation, inhibited by Ni(2+) ions. Fe(2+) ions do not inhibit zinc uptake. Its function is as follows. Transporter for the divalent cation Zn(2+). Mediates the influx of Zn(2+) into cells from extracellular space. Functions as the major importer of zinc from circulating blood plasma into prostate cells. In Homo sapiens (Human), this protein is Zinc transporter ZIP1.